The primary structure comprises 737 residues: Catalase-peroxidase (737 aa).

The N-terminal stretch at 1 to 23 (MLKKILPVLITLAIVHNTPTAWA) is a signal peptide. The segment at residues 102–223 (WHGAGTYRIY…LAATQMGLIY (122 aa)) is a cross-link (tryptophyl-tyrosyl-methioninium (Trp-Tyr) (with M-249)). The Proton acceptor role is filled by H103. A cross-link (tryptophyl-tyrosyl-methioninium (Tyr-Met) (with W-102)) is located at residues 223-249 (YVNPEGPNGKPDPVAAAKDIREAFARM). H264 contacts heme b.

The protein belongs to the peroxidase family. Peroxidase/catalase subfamily. In terms of assembly, homodimer or homotetramer. Heme b serves as cofactor. In terms of processing, formation of the three residue Trp-Tyr-Met cross-link is important for the catalase, but not the peroxidase activity of the enzyme.

It catalyses the reaction H2O2 + AH2 = A + 2 H2O. The catalysed reaction is 2 H2O2 = O2 + 2 H2O. In terms of biological role, bifunctional enzyme with both catalase and broad-spectrum peroxidase activity. This Yersinia pseudotuberculosis serotype I (strain IP32953) protein is Catalase-peroxidase.